A 386-amino-acid chain; its full sequence is NifS-like protein (386 aa).

Pyridoxal 5'-phosphate contacts are provided by residues 58–59 (SE) and 184–186 (SIN).

This sequence belongs to the class-V pyridoxal-phosphate-dependent aminotransferase family. NifS/IscS subfamily. It depends on pyridoxal 5'-phosphate as a cofactor.

Its subcellular location is the virion. The polypeptide is NifS-like protein (Ornithodoros (relapsing fever ticks)).